We begin with the raw amino-acid sequence, 800 residues long: Transducin beta-like protein 3 (800 aa).

Ala-2 bears the N-acetylalanine mark. WD repeat units lie at residues Glu-64–Lys-105, Ile-107–His-146, Gly-149–Val-190, Ala-193–Thr-232, Leu-245–Ala-284, Gly-290–Gln-329, Gly-332–Leu-372, Gly-374–Cys-413, Gly-419–Gly-459, Cys-477–Thr-516, Gly-519–Glu-560, His-562–Asp-602, and His-604–Glu-642. Phosphoserine is present on Ser-257. A Glycyl lysine isopeptide (Lys-Gly) (interchain with G-Cter in SUMO2) cross-link involves residue Lys-407.

As to quaternary structure, part of the small subunit (SSU) processome, composed of more than 70 proteins and the RNA chaperone small nucleolar RNA (snoRNA) U3.

Its subcellular location is the nucleus. The protein resides in the nucleolus. In terms of biological role, part of the small subunit (SSU) processome, first precursor of the small eukaryotic ribosomal subunit. During the assembly of the SSU processome in the nucleolus, many ribosome biogenesis factors, an RNA chaperone and ribosomal proteins associate with the nascent pre-rRNA and work in concert to generate RNA folding, modifications, rearrangements and cleavage as well as targeted degradation of pre-ribosomal RNA by the RNA exosome. This chain is Transducin beta-like protein 3 (TBL3), found in Bos taurus (Bovine).